Consider the following 790-residue polypeptide: MEVPMPESTINEDSKIFKLPEILPIMPIFHTVAFPKMMFPMDIVGNRFIQLVDEAMAKDRLLGLVLTRKAPSAEGPLCQCEDLHRVGTCVSILKLAKQAGEKAQLVVQGLARFRIVEFLEEEPYIQARVEKIEADILIKDLEIEALMANLSTLFDRVIKLSPFLPQEFAAMAKSIQEPGDLADIIASIVNASVEDKQKILETLDIRQRLREITLIVNHQLEILELGSKIQSQVQEDIDKSQRDFYLRQQLKAIREELGESDENRVEVAEYRKKIEEKMLTEEARKEAFRELDRMSRMHPASAEYSVATTYLDWITSLPWNERTQDNQDIRQARRILDEDHYGLDKAKKRIIEYLAVRKLKPDTKGPILCFVGPPGTGKTSLAQSIARALGRKFYRISLGGVHDEAEIRGHRRTYVGALPGRIIQGIRRAESSNPVFVLDEIDKVGSDFRGDPSSALLEVLDPEQNFAFMDHYLGVAFDLSHVTFITTANILDTIPPALRDRLEVIELPGYTQDEKLRIAERYLIPRQREANGLTPEQIKFTRGAARLIISGYTREAGVRNLEREIAAVCRGVASQIAEGEISSALISARDIHRYLGPVRMISDARERISKPGIAMGLAWTPTGGDLLFVEATAMKGRKGLTLTGQLGEVMKESASAALSFIRSNAVKIGIPVDFFEETDIHIHVPAGAIPKDGPSAGVTMLAALASLLTNRTVKNDLAMTGEITLRGLVLPVGGIKEKVLAAHRAGIKTIILPKWNRKDLEEIPSKVRKEMNFVFVNDMREVLNIALSRK.

A Lon N-terminal domain is found at 23–220 (LPIMPIFHTV…EITLIVNHQL (198 aa)). 372–379 (GPPGTGKT) contributes to the ATP binding site. The Lon proteolytic domain maps to 608-789 (ISKPGIAMGL…REVLNIALSR (182 aa)). Active-site residues include S695 and K738.

Belongs to the peptidase S16 family. Homohexamer. Organized in a ring with a central cavity.

Its subcellular location is the cytoplasm. The enzyme catalyses Hydrolysis of proteins in presence of ATP.. Functionally, ATP-dependent serine protease that mediates the selective degradation of mutant and abnormal proteins as well as certain short-lived regulatory proteins. Required for cellular homeostasis and for survival from DNA damage and developmental changes induced by stress. Degrades polypeptides processively to yield small peptide fragments that are 5 to 10 amino acids long. Binds to DNA in a double-stranded, site-specific manner. The sequence is that of Lon protease from Syntrophus aciditrophicus (strain SB).